Consider the following 86-residue polypeptide: Small ribosomal subunit protein bS16 (86 aa).

It belongs to the bacterial ribosomal protein bS16 family.

The sequence is that of Small ribosomal subunit protein bS16 from Leptothrix cholodnii (strain ATCC 51168 / LMG 8142 / SP-6) (Leptothrix discophora (strain SP-6)).